Consider the following 214-residue polypeptide: Octanoyltransferase (214 aa).

Residues 32 to 207 (EDTLDEIWLV…NLLALLNHPP (176 aa)) form the BPL/LPL catalytic domain. Residues 71 to 78 (RGGQVTYH), 138 to 140 (SLG), and 151 to 153 (GLA) contribute to the substrate site. C169 serves as the catalytic Acyl-thioester intermediate.

This sequence belongs to the LipB family.

The protein localises to the cytoplasm. It catalyses the reaction octanoyl-[ACP] + L-lysyl-[protein] = N(6)-octanoyl-L-lysyl-[protein] + holo-[ACP] + H(+). The protein operates within protein modification; protein lipoylation via endogenous pathway; protein N(6)-(lipoyl)lysine from octanoyl-[acyl-carrier-protein]: step 1/2. In terms of biological role, catalyzes the transfer of endogenously produced octanoic acid from octanoyl-acyl-carrier-protein onto the lipoyl domains of lipoate-dependent enzymes. Lipoyl-ACP can also act as a substrate although octanoyl-ACP is likely to be the physiological substrate. In Klebsiella pneumoniae subsp. pneumoniae (strain ATCC 700721 / MGH 78578), this protein is Octanoyltransferase.